The primary structure comprises 295 residues: MSSSRPVFRSRWLPYLLVAPQLIITVIFFIWPAGEALWYSLQSVDPFGFSSRFVGLDNFVALFHDSYYIDSFWTTIKFSTFVTVSGLLVSLFFAALVEYIVRGSRFYQTLMLLPYAVAPAVAAVLWIFLFNPGRGLITHFLAEFGYDWNHAQNSGQAMFLVVFASVWKQISYNFLFFYAALQSIPRSLIEAAAIDGAGPIRRFFKIALPLIAPVSFFLLVVNLVYAFFDTFPVIDAATSGGPVQATTTLIYKIYREGFTGLDLASSAAQSVVLMFLVIVLTVMQFRYVESKVRYQ.

The Cytoplasmic portion of the chain corresponds to Met-1 to Arg-11. The helical transmembrane segment at Trp-12 to Pro-32 threads the bilayer. Residues Ala-33 to Thr-80 are Periplasmic-facing. Residues Ile-76–Gln-284 form the ABC transmembrane type-1 domain. A helical transmembrane segment spans residues Phe-81 to Val-101. The Cytoplasmic portion of the chain corresponds to Arg-102–Thr-109. A helical transmembrane segment spans residues Leu-110–Phe-130. Residues Asn-131–Gln-156 are Periplasmic-facing. A helical transmembrane segment spans residues Ala-157–Phe-177. At Tyr-178–Ala-207 the chain is on the cytoplasmic side. The chain crosses the membrane as a helical span at residues Leu-208–Phe-228. Residues Asp-229–Asp-262 lie on the Periplasmic side of the membrane. The helical transmembrane segment at Leu-263–Met-283 threads the bilayer. At Gln-284–Gln-295 the chain is on the cytoplasmic side.

It belongs to the binding-protein-dependent transport system permease family. UgpAE subfamily. The complex is composed of two ATP-binding proteins (UgpC), two transmembrane proteins (UgpA and UgpE) and a solute-binding protein (UgpB).

The protein resides in the cell inner membrane. In terms of biological role, part of the ABC transporter complex UgpBAEC involved in sn-glycerol-3-phosphate (G3P) import. Probably responsible for the translocation of the substrate across the membrane. The sequence is that of sn-glycerol-3-phosphate transport system permease protein UgpA (ugpA) from Escherichia coli O157:H7.